A 69-amino-acid chain; its full sequence is Purkinje cell protein 4-like protein 1 (69 aa).

Residues 1-15 (MSELNTKTSPATNQA) are compositionally biased toward polar residues. The segment at 1–47 (MSELNTKTSPATNQAPGPEEKGKAGSAKKTEDEEEEIDIDLTAPETE) is disordered. Threonine 8 carries the phosphothreonine modification. Residues 18-31 (PEEKGKAGSAKKTE) are compositionally biased toward basic and acidic residues. Residues 46–69 (TEKAALAIQGKFRRFQKRKKDPSS) enclose the IQ domain.

It belongs to the PCP4 family.

The sequence is that of Purkinje cell protein 4-like protein 1 (PCP4L1) from Bos taurus (Bovine).